The primary structure comprises 321 residues: Lipoyl synthase (321 aa).

[4Fe-4S] cluster contacts are provided by Cys68, Cys73, Cys79, Cys94, Cys98, Cys101, and Ser308. The region spanning 80-297 (FNHGTATFMI…KALADELGFT (218 aa)) is the Radical SAM core domain.

This sequence belongs to the radical SAM superfamily. Lipoyl synthase family. The cofactor is [4Fe-4S] cluster.

It is found in the cytoplasm. The catalysed reaction is [[Fe-S] cluster scaffold protein carrying a second [4Fe-4S](2+) cluster] + N(6)-octanoyl-L-lysyl-[protein] + 2 oxidized [2Fe-2S]-[ferredoxin] + 2 S-adenosyl-L-methionine + 4 H(+) = [[Fe-S] cluster scaffold protein] + N(6)-[(R)-dihydrolipoyl]-L-lysyl-[protein] + 4 Fe(3+) + 2 hydrogen sulfide + 2 5'-deoxyadenosine + 2 L-methionine + 2 reduced [2Fe-2S]-[ferredoxin]. It functions in the pathway protein modification; protein lipoylation via endogenous pathway; protein N(6)-(lipoyl)lysine from octanoyl-[acyl-carrier-protein]: step 2/2. Its function is as follows. Catalyzes the radical-mediated insertion of two sulfur atoms into the C-6 and C-8 positions of the octanoyl moiety bound to the lipoyl domains of lipoate-dependent enzymes, thereby converting the octanoylated domains into lipoylated derivatives. This chain is Lipoyl synthase, found in Shewanella oneidensis (strain ATCC 700550 / JCM 31522 / CIP 106686 / LMG 19005 / NCIMB 14063 / MR-1).